The chain runs to 87 residues: Small ribosomal subunit protein uS17 (87 aa).

Belongs to the universal ribosomal protein uS17 family. As to quaternary structure, part of the 30S ribosomal subunit.

Functionally, one of the primary rRNA binding proteins, it binds specifically to the 5'-end of 16S ribosomal RNA. The protein is Small ribosomal subunit protein uS17 of Listeria innocua serovar 6a (strain ATCC BAA-680 / CLIP 11262).